The primary structure comprises 70 residues: Homeobox protein OTX2 (70 aa).

The tract at residues 34-70 is disordered; that stretch reads HQLPGPGATLSPMGTNAVTSHLNQSPASLSTQGYGAS. Residues 45–70 are compositionally biased toward polar residues; that stretch reads PMGTNAVTSHLNQSPASLSTQGYGAS.

Belongs to the paired homeobox family. Bicoid subfamily.

The protein resides in the nucleus. Functionally, transcription factor probably involved in the development of the brain and the sense organs. Can bind to the bicoid/BCD target sequence (BTS): 5'-TCTAATCCC-3'. This is Homeobox protein OTX2 (Otx2) from Rattus norvegicus (Rat).